Consider the following 339-residue polypeptide: Anthranilate phosphoribosyltransferase (339 aa).

Residues G79, G82–D83, S87, N89–T92, K107–S115, and S119 each bind 5-phospho-alpha-D-ribose 1-diphosphate. Position 79 (G79) interacts with anthranilate. Position 91 (S91) interacts with Mg(2+). N110 serves as a coordination point for anthranilate. Residue R165 participates in anthranilate binding. Positions 224 and 225 each coordinate Mg(2+).

This sequence belongs to the anthranilate phosphoribosyltransferase family. As to quaternary structure, homodimer. Mg(2+) is required as a cofactor.

The catalysed reaction is N-(5-phospho-beta-D-ribosyl)anthranilate + diphosphate = 5-phospho-alpha-D-ribose 1-diphosphate + anthranilate. The protein operates within amino-acid biosynthesis; L-tryptophan biosynthesis; L-tryptophan from chorismate: step 2/5. In terms of biological role, catalyzes the transfer of the phosphoribosyl group of 5-phosphorylribose-1-pyrophosphate (PRPP) to anthranilate to yield N-(5'-phosphoribosyl)-anthranilate (PRA). The polypeptide is Anthranilate phosphoribosyltransferase (Listeria welshimeri serovar 6b (strain ATCC 35897 / DSM 20650 / CCUG 15529 / CIP 8149 / NCTC 11857 / SLCC 5334 / V8)).